The primary structure comprises 238 residues: Probable septum site-determining protein MinC (238 aa).

This sequence belongs to the MinC family. As to quaternary structure, interacts with MinD and FtsZ.

Its function is as follows. Cell division inhibitor that blocks the formation of polar Z ring septums. Rapidly oscillates between the poles of the cell to destabilize FtsZ filaments that have formed before they mature into polar Z rings. Prevents FtsZ polymerization. The protein is Probable septum site-determining protein MinC of Aeromonas salmonicida (strain A449).